Here is a 191-residue protein sequence, read N- to C-terminus: Cell division protein SepF (191 aa).

Residues 153–178 (FPEEASPSNVSSKKTSQYKFETNTTP) are compositionally biased toward polar residues. The tract at residues 153-191 (FPEEASPSNVSSKKTSQYKFETNTTPEPAWGESKLSAYN) is disordered.

The protein belongs to the SepF family. In terms of assembly, homodimer. Interacts with FtsZ.

It localises to the cytoplasm. In terms of biological role, cell division protein that is part of the divisome complex and is recruited early to the Z-ring. Probably stimulates Z-ring formation, perhaps through the cross-linking of FtsZ protofilaments. Its function overlaps with FtsA. The sequence is that of Cell division protein SepF from Prochlorococcus marinus subsp. pastoris (strain CCMP1986 / NIES-2087 / MED4).